The sequence spans 384 residues: MKRRHWSHPSCGLLLLVAVFCLLLVFRCSQLRHSGDGAAAAAPDGGAGRNDGDDVDERLVELAAVDPAAMAVLQAAKRLLEGNLARAPERHRDVALRGLREWVGKQERFDPGVMSELVELIKRPIDRYNGDGGGGGEGEGRRYASCAVVGNSGILLAAEHGELIDGHELVVRLNNAPAGDGRYARHVGARTGLAFLNSNVLSQCAVPRRGACFCRAYGEGVPILTYMCNAAHFVEHAVCNNASSSSSGAADATAAAPVIVTDPRLDALCARIVKYYSLRRFARETGRPAEEWARRHEEGMFHYSSGMQAVVAAAGVCDRVSVFGFGKDASARHHYHTLQRRELDLHDYEAEYEFYRDLESRPEAIPFLRQRDSGFRLPPVSFYR.

At 1-5 (MKRRH) the chain is on the cytoplasmic side. A helical; Signal-anchor for type II membrane protein membrane pass occupies residues 6-26 (WSHPSCGLLLLVAVFCLLLVF). The Lumenal segment spans residues 27–384 (RCSQLRHSGD…FRLPPVSFYR (358 aa)). Asn-241 is a glycosylation site (N-linked (GlcNAc...) asparagine).

The protein belongs to the glycosyltransferase 29 family.

Its subcellular location is the golgi apparatus membrane. Possesses sialyltransferase-like activity in vitro. Transfers sialic acid to the glycoprotein asialofetuin. The transferred sialic acid is linked to galactose of Gal-beta-1,3-GalNAc through alpha-2,6-linkage. The polypeptide is Sialyltransferase-like protein 3 (Oryza sativa subsp. indica (Rice)).